Here is a 167-residue protein sequence, read N- to C-terminus: Phospholipase A2 heteromtoxin (167 aa).

Residues tryptophan 38, glycine 40, and glycine 42 each contribute to the Ca(2+) site. Cystine bridges form between cysteine 39–cysteine 61, cysteine 60–cysteine 99, cysteine 67–cysteine 92, cysteine 90–cysteine 127, and cysteine 132–cysteine 144. Histidine 64 is a catalytic residue. Residue aspartate 65 coordinates Ca(2+). The propeptide occupies 136 to 140 (GRSAR).

It belongs to the phospholipase A2 family. Group III subfamily. As to quaternary structure, heterodimer composed of a large and a small subunits; disulfide-linked. The cofactor is Ca(2+). In terms of tissue distribution, expressed by the venom gland.

It localises to the secreted. The enzyme catalyses a 1,2-diacyl-sn-glycero-3-phosphocholine + H2O = a 1-acyl-sn-glycero-3-phosphocholine + a fatty acid + H(+). Its function is as follows. Phospholipase toxin, which catalyzes the calcium-dependent hydrolysis of the 2-acyl groups in 3-sn-phosphoglycerides. Inhibits both skeletal (RYR1) and cardiac (RYR2) ryanodine receptors (calcium release channels). Probably blocks ryanodine receptors by generating a lipid product. The protein is Phospholipase A2 heteromtoxin of Heterometrus laoticus (Thai giant scorpion).